The sequence spans 692 residues: Glycine--tRNA ligase beta subunit (692 aa).

Belongs to the class-II aminoacyl-tRNA synthetase family. Tetramer of two alpha and two beta subunits.

Its subcellular location is the cytoplasm. The catalysed reaction is tRNA(Gly) + glycine + ATP = glycyl-tRNA(Gly) + AMP + diphosphate. The polypeptide is Glycine--tRNA ligase beta subunit (Oceanobacillus iheyensis (strain DSM 14371 / CIP 107618 / JCM 11309 / KCTC 3954 / HTE831)).